We begin with the raw amino-acid sequence, 299 residues long: MLQLFYFSAIIASVILNFVGIIMNLFIMVVNCKTWVKSHRISSSDRILFSLGITRFLMLGLFLVNTIFFVSSNTERSVYLSAFFVLCFMFXDSSSLWFVTLLNILYCVKITNFQHSVFLLLKQNISPKIPRLLLACVLISAFTTCLYITLSQASPFPELVTKRNNTSFNTHEGILSLVVSLVLSSSLQFIINVTSASLLIHSLRRHIQKMQKNATGFWNPQTEAHVGAMKLMIYFLILYIPYSVATLVQYLPFYVGMDMGTKAICLIFATLYSPGHSVLIIITHPKLKTTAKKILCFKK.

Topologically, residues 1 to 9 (MLQLFYFSA) are extracellular. Residues 10-30 (IIASVILNFVGIIMNLFIMVV) form a helical membrane-spanning segment. Over 31-46 (NCKTWVKSHRISSSDR) the chain is Cytoplasmic. A helical membrane pass occupies residues 47 to 67 (ILFSLGITRFLMLGLFLVNTI). Over 68-81 (FFVSSNTERSVYLS) the chain is Extracellular. A helical transmembrane segment spans residues 82 to 102 (AFFVLCFMFXDSSSLWFVTLL). Over 103–131 (NILYCVKITNFQHSVFLLLKQNISPKIPR) the chain is Cytoplasmic. A helical membrane pass occupies residues 132–152 (LLLACVLISAFTTCLYITLSQ). At 153–172 (ASPFPELVTKRNNTSFNTHE) the chain is on the extracellular side. Residues Asn164 and Asn165 are each glycosylated (N-linked (GlcNAc...) asparagine). The chain crosses the membrane as a helical span at residues 173 to 193 (GILSLVVSLVLSSSLQFIINV). At 194–230 (TSASLLIHSLRRHIQKMQKNATGFWNPQTEAHVGAMK) the chain is on the cytoplasmic side. A helical membrane pass occupies residues 231 to 251 (LMIYFLILYIPYSVATLVQYL). Residues 252-262 (PFYVGMDMGTK) lie on the Extracellular side of the membrane. Residues 263-283 (AICLIFATLYSPGHSVLIIIT) traverse the membrane as a helical segment. Topologically, residues 284–299 (HPKLKTTAKKILCFKK) are cytoplasmic.

This sequence belongs to the G-protein coupled receptor T2R family.

Its subcellular location is the membrane. The protein localises to the cell projection. It is found in the cilium membrane. Functionally, gustducin-coupled receptor implicated in the perception of bitter compounds in the oral cavity and the gastrointestinal tract. Signals through PLCB2 and the calcium-regulated cation channel TRPM5. In airway epithelial cells, binding of denatonium increases the intracellular calcium ion concentration and stimulates ciliary beat frequency. This is Taste receptor type 2 member 4 (TAS2R4) from Pongo pygmaeus (Bornean orangutan).